The primary structure comprises 540 residues: MTAPSTPSASSVVPSGADTSPHVAAIHEKILIVDFGSQVTQLIARRVREEGVYSEIVPFQKAEAAFAEMKPKAVILSGGPASVLDADAPAAPMAILEAGVPVLGICYGEQTLAKQLGGTVEAGHHREFGRATIEITDDCALFDGVWQKGGTYDVWMSHGDRVTKLPDGFRGVAKAPGSPISVIADDKRKFYATQFHLEVVHTPDGAKILRNFVRKVAGLTGDWTMRAFREEAIEKIRAQVGTGKVICGLSGGVDSAVAAVLIHEAIGDQLTCVFVDHGMLRKDEAKTVVDLFRHHYNIPLVHVDASETFLGALSGVTDPEQKRKIIGKLFIDVFDAEAKVVGGADYLAQGTLYPDVIESVSFTGGPSVTIKSHHNVGGLPERMNMKLVEPLRELFKDEVRALGRELGLPEIFVGRHPFPGPGLAIRCPGEITAEKLDILRNADAVYIDQIRKAGLYDAIWQAFAVLLPVKTVGVMGDGRTYEYVVGLRAVTSTDGMTADYYPFDMAFLGATATRIINEVKGVNRVVYDVTSKPPGTIEWE.

The 194-residue stretch at 29 to 222 (KILIVDFGSQ…VRKVAGLTGD (194 aa)) folds into the Glutamine amidotransferase type-1 domain. The active-site Nucleophile is cysteine 106. Catalysis depends on residues histidine 196 and glutamate 198. Residues 223–415 (WTMRAFREEA…LGLPEIFVGR (193 aa)) enclose the GMPS ATP-PPase domain. 250–256 (SGGVDSA) contributes to the ATP binding site.

Homodimer.

It carries out the reaction XMP + L-glutamine + ATP + H2O = GMP + L-glutamate + AMP + diphosphate + 2 H(+). It participates in purine metabolism; GMP biosynthesis; GMP from XMP (L-Gln route): step 1/1. In terms of biological role, catalyzes the synthesis of GMP from XMP. The sequence is that of GMP synthase [glutamine-hydrolyzing] from Rhodopseudomonas palustris (strain HaA2).